The primary structure comprises 57 residues: Large ribosomal subunit protein bL33 (57 aa).

The protein belongs to the bacterial ribosomal protein bL33 family.

In Shewanella halifaxensis (strain HAW-EB4), this protein is Large ribosomal subunit protein bL33.